Consider the following 130-residue polypeptide: Small ribosomal subunit protein uS9 (130 aa).

Belongs to the universal ribosomal protein uS9 family.

This chain is Small ribosomal subunit protein uS9, found in Aster yellows witches'-broom phytoplasma (strain AYWB).